The primary structure comprises 228 residues: Sec-independent protein translocase protein TatB (228 aa).

The helical transmembrane segment at 1–21 (MFDFGLGELVFVGIIALIVLG) threads the bilayer. Disordered stretches follow at residues 109 to 162 (DFGV…AETD) and 197 to 228 (PHTT…VRKS). Over residues 206-228 (AISRKRDFRPKHRAKPKLRVRKS) the composition is skewed to basic residues.

It belongs to the TatB family. In terms of assembly, the Tat system comprises two distinct complexes: a TatABC complex, containing multiple copies of TatA, TatB and TatC subunits, and a separate TatA complex, containing only TatA subunits. Substrates initially bind to the TatABC complex, which probably triggers association of the separate TatA complex to form the active translocon.

The protein resides in the cell inner membrane. In terms of biological role, part of the twin-arginine translocation (Tat) system that transports large folded proteins containing a characteristic twin-arginine motif in their signal peptide across membranes. Together with TatC, TatB is part of a receptor directly interacting with Tat signal peptides. TatB may form an oligomeric binding site that transiently accommodates folded Tat precursor proteins before their translocation. This chain is Sec-independent protein translocase protein TatB, found in Neisseria meningitidis serogroup B (strain ATCC BAA-335 / MC58).